Reading from the N-terminus, the 115-residue chain is U3-lycotoxin-Ls1a (115 aa).

The first 20 residues, 1 to 20, serve as a signal peptide directing secretion; that stretch reads MKFVLLFGVLLLTLFSYSSA. The propeptide occupies 21 to 44; that stretch reads EMLDDFDQADEDELLSLIEKEEAR. 4 cysteine pairs are disulfide-bonded: Cys-48–Cys-63, Cys-55–Cys-72, Cys-62–Cys-87, and Cys-74–Cys-85.

Belongs to the neurotoxin 19 (CSTX) family. 01 subfamily. In terms of tissue distribution, expressed by the venom gland.

It localises to the secreted. This is U3-lycotoxin-Ls1a from Lycosa singoriensis (Wolf spider).